Consider the following 100-residue polypeptide: Small ribosomal subunit protein uS14 (100 aa).

Belongs to the universal ribosomal protein uS14 family. As to quaternary structure, part of the 30S ribosomal subunit. Contacts proteins S3 and S10.

Binds 16S rRNA, required for the assembly of 30S particles and may also be responsible for determining the conformation of the 16S rRNA at the A site. This is Small ribosomal subunit protein uS14 from Trichormus variabilis (strain ATCC 29413 / PCC 7937) (Anabaena variabilis).